The chain runs to 437 residues: Homogentisate 1,2-dioxygenase (437 aa).

The Proton acceptor role is filled by histidine 295. Histidine 338 and glutamate 344 together coordinate Fe cation. Tyrosine 353 and histidine 374 together coordinate homogentisate. Histidine 374 provides a ligand contact to Fe cation.

It belongs to the homogentisate dioxygenase family. As to quaternary structure, hexamer; dimer of trimers. The cofactor is Fe cation.

The catalysed reaction is homogentisate + O2 = 4-maleylacetoacetate + H(+). It functions in the pathway amino-acid degradation; L-phenylalanine degradation; acetoacetate and fumarate from L-phenylalanine: step 4/6. Its function is as follows. Involved in the catabolism of homogentisate (2,5-dihydroxyphenylacetate or 2,5-OH-PhAc), a central intermediate in the degradation of phenylalanine and tyrosine. Catalyzes the oxidative ring cleavage of the aromatic ring of homogentisate to yield maleylacetoacetate. This is Homogentisate 1,2-dioxygenase from Myxococcus xanthus (strain DK1622).